A 626-amino-acid chain; its full sequence is Phosphomethylpyrimidine synthase (626 aa).

Positions methionine 1–glutamine 22 are disordered. Polar residues predominate over residues leucine 10 to glutamine 22. Residues asparagine 232, methionine 261, tyrosine 290, histidine 326, serine 346–glycine 348, aspartate 387–arginine 390, and glutamate 426 each bind substrate. Histidine 430 provides a ligand contact to Zn(2+). Residue tyrosine 453 coordinates substrate. A Zn(2+)-binding site is contributed by histidine 494. Residues cysteine 574, cysteine 577, and cysteine 582 each contribute to the [4Fe-4S] cluster site.

The protein belongs to the ThiC family. Homodimer. It depends on [4Fe-4S] cluster as a cofactor.

The catalysed reaction is 5-amino-1-(5-phospho-beta-D-ribosyl)imidazole + S-adenosyl-L-methionine = 4-amino-2-methyl-5-(phosphooxymethyl)pyrimidine + CO + 5'-deoxyadenosine + formate + L-methionine + 3 H(+). The protein operates within cofactor biosynthesis; thiamine diphosphate biosynthesis. In terms of biological role, catalyzes the synthesis of the hydroxymethylpyrimidine phosphate (HMP-P) moiety of thiamine from aminoimidazole ribotide (AIR) in a radical S-adenosyl-L-methionine (SAM)-dependent reaction. This is Phosphomethylpyrimidine synthase from Pseudomonas putida (strain ATCC 700007 / DSM 6899 / JCM 31910 / BCRC 17059 / LMG 24140 / F1).